We begin with the raw amino-acid sequence, 346 residues long: Partitioning defective 6 homolog alpha (346 aa).

The interaction with PRKCI and PRKCZ stretch occupies residues 1 to 116; sequence MARPQRTPAR…SNSLQRRKKG (116 aa). The PB1 domain maps to 15-95; sequence IVEVKSKFDA…PPLRLLVQKR (81 aa). The interval 126 to 253 is interaction with PARD3 and CDC42; sequence RTRPPLLISL…VTVKPANQRN (128 aa). One can recognise a Pseudo-CRIB domain in the interval 133-150; sequence ISLPQDFRQVSSVIDVDL. Residues 157-250 form the PDZ domain; sequence RVRLHKHGSD…NLIVTVKPAN (94 aa). Residues 257–346 are disordered; the sequence is RGASGRLTGP…IRGDGSGFSL (90 aa). Ser278 and Ser345 each carry phosphoserine.

It belongs to the PAR6 family. As to quaternary structure, interacts with MAP2K5. Interacts with PARD3. Interacts with GTP-bound forms of CDC42, RHOQ/TC10 and RAC1. Interacts with the N-terminal part of PRKCI and PRKCZ. Part of a complex with PARD3, CDC42 or RAC1 and PRKCI or PRKCZ. Part of a complex with LLGL1 and PRKCI. Interacts with human T-cell leukemia virus type I TAX protein. Interacts with PALS1 and CRB3. Interacts with TGFBR1; involved in TGF-beta induced epithelial to mesenchymal transition. Interacts with ECT2 ('Thr-359' phosphorylated form) and PRKCI. Interacts with DCTN1 and PCM1. Phosphorylated by the TGF-beta receptor. Post-translationally, ubiquitinated by the SCF(FBXO31) complex, leading to its proteasomal degradation. Expressed in pancreas, skeletal muscle, brain and heart. Weakly expressed in kidney and placenta.

It localises to the cytoplasm. It is found in the cell membrane. The protein resides in the cell projection. Its subcellular location is the ruffle. The protein localises to the cell junction. It localises to the tight junction. It is found in the cytoskeleton. The protein resides in the microtubule organizing center. Its subcellular location is the centrosome. The protein localises to the centriolar satellite. Adapter protein involved in asymmetrical cell division and cell polarization processes. Probably involved in the formation of epithelial tight junctions. Association with PARD3 may prevent the interaction of PARD3 with F11R/JAM1, thereby preventing tight junction assembly. The PARD6-PARD3 complex links GTP-bound Rho small GTPases to atypical protein kinase C proteins. Regulates centrosome organization and function. Essential for the centrosomal recruitment of key proteins that control centrosomal microtubule organization. This chain is Partitioning defective 6 homolog alpha (PARD6A), found in Homo sapiens (Human).